The sequence spans 259 residues: Dolichol-phosphate mannosyltransferase subunit 1 (259 aa).

At Ala-2 the chain carries N-acetylalanine. Position 3 is a phosphoserine (Ser-3). Positions 31, 33, 35, 62, 64, 117, 118, 119, 146, 233, and 239 each coordinate GDP-alpha-D-mannose. A Mg(2+)-binding site is contributed by Asp-119. Asp-119 is a Mn(2+) binding site.

The protein belongs to the glycosyltransferase 2 family. As to quaternary structure, component of the dolichol-phosphate mannose (DPM) synthase complex composed of DPM1, DPM2 and DPM3; within the complex, directly interacts with DPM3. This interaction may stabilize DPM1. Requires Mg(2+) as cofactor. The cofactor is Mn(2+). Ca(2+) serves as cofactor.

The protein localises to the endoplasmic reticulum. The enzyme catalyses a di-trans,poly-cis-dolichyl phosphate + GDP-alpha-D-mannose = a di-trans,poly-cis-dolichyl beta-D-mannosyl phosphate + GDP. It participates in protein modification; protein glycosylation. Functionally, transfers mannose from GDP-mannose to dolichol monophosphate to form dolichol phosphate mannose (Dol-P-Man) which is the mannosyl donor in pathways leading to N-glycosylation, glycosyl phosphatidylinositol membrane anchoring, and O-mannosylation of proteins; catalytic subunit of the dolichol-phosphate mannose (DPM) synthase complex. In Sus scrofa (Pig), this protein is Dolichol-phosphate mannosyltransferase subunit 1 (DPM1).